The chain runs to 441 residues: MKKFSVVIAGGGSTFTPGIVLMLLDNMDKFPIRKLKFYDNDKERQAIVAGACEIILKEKAPEIEFLATTNPKEAFTDVDFVMAHIRVGKYAMRELDEKIPLKYGVVGQETCGPGGIAYGMRSIGGVIEILDYMEKYSPNAWMLNYSNPAAIVAEATRKLRPNSKILNICDMPIGIETRMAEILGLESRKEMTVKYYGLNHFGWWSDIRDKDGNDLMPKLKEHVKKYGYVAENGDTQHTDASWNDTFAKAKDVYAVDPSTLPNTYLKYYLFPDYVVEHSNKEYTRANEVMDGREKFVFGECKKVIENQSTKGCKMEIDEHASYIVDLARAISYNTHERMLLIVPNNGSIENFDSTGMVEIPCIVGSNGPEPLTMGKIPQFQKGLMEQQVSVEKLVVEAWKEKSYQKLWQAITLSRTVPSAKVAKQILDELIEVNKDYWPELN.

4–70 (FSVVIAGGGS…PEIEFLATTN (67 aa)) lines the NAD(+) pocket. Arginine 93 and asparagine 147 together coordinate substrate. Cysteine 169 contributes to the Mn(2+) binding site. Catalysis depends on aspartate 170, which acts as the Proton donor. Residue histidine 200 participates in Mn(2+) binding. Residue tyrosine 264 is the Proton acceptor of the active site. Arginine 284 contacts substrate.

As to quaternary structure, homotetramer. NAD(+) serves as cofactor. Mn(2+) is required as a cofactor.

It carries out the reaction alpha-maltose 6'-phosphate + H2O = D-glucose 6-phosphate + D-glucose. Its function is as follows. Catalyzes the hydrolysis of O-alpha-linked disaccharide 6-phosphates, including maltose-6'P and all five phosphorylated isomers of sucrose, but not sucrose-6P. Does not hydrolyze beta-linked disaccharide 6-phosphates such as cellobiose-6'P and gentiobiose-6'P. Is involved in the dissimilation of maltose and related O-alpha-linked glucosides produced via the phosphoenolpyruvate-dependent sugar phosphotransferase system (PEP-PTS). This chain is Maltose-6'-phosphate glucosidase MalH (malH), found in Clostridium acetobutylicum (strain ATCC 824 / DSM 792 / JCM 1419 / IAM 19013 / LMG 5710 / NBRC 13948 / NRRL B-527 / VKM B-1787 / 2291 / W).